The primary structure comprises 551 residues: Tetrachloroethene reductive dehalogenase (551 aa).

The segment at residues Met1–Ala39 is a signal peptide (tat-type signal). One can recognise a 4Fe-4S ferredoxin-type 1 domain in the interval Pro411 to Asp440. Positions 420, 423, 426, 430, 467, 478, 481, and 485 each coordinate [4Fe-4S] cluster. Residues Cys478–Asp496 enclose the 4Fe-4S ferredoxin-type 2 domain.

Belongs to the PceA family. As to quaternary structure, monomer. The cofactor is [4Fe-4S] cluster. It depends on corrinoid as a cofactor. In terms of processing, predicted to be exported by the Tat system. The position of the signal peptide cleavage has been experimentally proven.

It localises to the cell membrane. The enzyme catalyses trichloroethene + chloride + A + H(+) = tetrachloroethene + AH2. It carries out the reaction trichloroethene + AH2 = (Z)-1,2-dichloroethene + chloride + A + H(+). Activity is inhibited by ammonium ions. Photoreversibly inactivated by 1-iodopropane. Its function is as follows. Catalyzes the reductive dechlorination of tetrachloroethene (PCE) to trichloroethene (TCE) and of trichloroethene to cis-1,2-dichloroethene (DCE). Can also use trichlorofluoroethene, tetrachloromethane, hexachloroethane, tetrachloroethane, trichloroethane and 1,1,1-trichloro-2,2,2-trifluoroethane. Menaquinone can act as the electron donor. Reduced methyl viologen can act as the artificial electron donor. This chain is Tetrachloroethene reductive dehalogenase, found in Dehalobacter restrictus (strain DSM 9455 / PER-K23).